The chain runs to 206 residues: Large ribosomal subunit protein uL4 (206 aa).

It belongs to the universal ribosomal protein uL4 family. In terms of assembly, part of the 50S ribosomal subunit.

In terms of biological role, one of the primary rRNA binding proteins, this protein initially binds near the 5'-end of the 23S rRNA. It is important during the early stages of 50S assembly. It makes multiple contacts with different domains of the 23S rRNA in the assembled 50S subunit and ribosome. Functionally, forms part of the polypeptide exit tunnel. This Cereibacter sphaeroides (strain KD131 / KCTC 12085) (Rhodobacter sphaeroides) protein is Large ribosomal subunit protein uL4.